Consider the following 247-residue polypeptide: 1-(5-phosphoribosyl)-5-[(5-phosphoribosylamino)methylideneamino] imidazole-4-carboxamide isomerase (247 aa).

Aspartate 8 (proton acceptor) is an active-site residue. Aspartate 131 serves as the catalytic Proton donor.

Belongs to the HisA/HisF family.

It localises to the cytoplasm. It carries out the reaction 1-(5-phospho-beta-D-ribosyl)-5-[(5-phospho-beta-D-ribosylamino)methylideneamino]imidazole-4-carboxamide = 5-[(5-phospho-1-deoxy-D-ribulos-1-ylimino)methylamino]-1-(5-phospho-beta-D-ribosyl)imidazole-4-carboxamide. It functions in the pathway amino-acid biosynthesis; L-histidine biosynthesis; L-histidine from 5-phospho-alpha-D-ribose 1-diphosphate: step 4/9. The polypeptide is 1-(5-phosphoribosyl)-5-[(5-phosphoribosylamino)methylideneamino] imidazole-4-carboxamide isomerase (Acidovorax sp. (strain JS42)).